The primary structure comprises 117 residues: MDKKSARIRRAARARHMMREQGVIRLVIHRTSRHIYAQVIAPNGSEVLATASTVEKAISEQVKYTGNKDAAAVVGKIVAERALEKGIKSVAFDRSGFKYHGRVQSLADAAREAGLQF.

It belongs to the universal ribosomal protein uL18 family. As to quaternary structure, part of the 50S ribosomal subunit; part of the 5S rRNA/L5/L18/L25 subcomplex. Contacts the 5S and 23S rRNAs.

Functionally, this is one of the proteins that bind and probably mediate the attachment of the 5S RNA into the large ribosomal subunit, where it forms part of the central protuberance. This is Large ribosomal subunit protein uL18 from Histophilus somni (strain 129Pt) (Haemophilus somnus).